A 713-amino-acid polypeptide reads, in one-letter code: Serine/threonine-protein kinase SSN3 (713 aa).

In terms of domain architecture, Protein kinase spans 66–484; it reads YTILGFLSSG…ANQALEHAWF (419 aa). 72-80 serves as a coordination point for ATP; the sequence is LSSGTYGRV. Positions 104–120 are enriched in low complexity; the sequence is NAGTGSGTATVGSGAST. Positions 104–188 are disordered; that stretch reads NAGTGSGTAT…GGSDNTLQLS (85 aa). Residues 129 to 142 show a composition bias toward polar residues; the sequence is QQHQLLDSPSSSLH. The span at 158 to 175 shows a compositional bias: low complexity; the sequence is GTPSASPSLSASLGTSTA. K201 provides a ligand contact to ATP. The active-site Proton acceptor is D304. Positions 657–672 are enriched in polar residues; sequence SNPATVRSSHSIGSTE. Positions 657–713 are disordered; the sequence is SNPATVRSSHSIGSTESITPTTSSQPIPAQPSSAPLARTTNLVATATRNQQRKRQRN. Positions 673 to 691 are enriched in low complexity; it reads SITPTTSSQPIPAQPSSAP. Residues 694 to 705 show a composition bias toward polar residues; that stretch reads RTTNLVATATRN.

It belongs to the protein kinase superfamily. CMGC Ser/Thr protein kinase family. CDC2/CDKX subfamily. As to quaternary structure, component of the srb8-11 complex, a regulatory module of the Mediator complex. It depends on Mg(2+) as a cofactor.

Its subcellular location is the nucleus. The enzyme catalyses L-seryl-[protein] + ATP = O-phospho-L-seryl-[protein] + ADP + H(+). The catalysed reaction is L-threonyl-[protein] + ATP = O-phospho-L-threonyl-[protein] + ADP + H(+). It catalyses the reaction [DNA-directed RNA polymerase] + ATP = phospho-[DNA-directed RNA polymerase] + ADP + H(+). In terms of biological role, component of the srb8-11 complex. The srb8-11 complex is a regulatory module of the Mediator complex which is itself dependent transcription. The srb8-11 complex may be involved in the transcriptional repression of a subset of genes regulated by Mediator. It may inhibit the association of the Mediator complex with RNA polymerase II to form the holoenzyme complex. The srb8-11 complex phosphorylates the C-terminal domain (CTD) of the largest subunit of RNA polymerase II. This is Serine/threonine-protein kinase SSN3 (SSN3) from Mycosarcoma maydis (Corn smut fungus).